A 551-amino-acid polypeptide reads, in one-letter code: Cytochrome P450 monooxygenase abl5 (551 aa).

N-linked (GlcNAc...) asparagine glycosylation occurs at asparagine 24. Residues 37–57 (VVLNTLTAIVVVWICYRAVIY) form a helical membrane-spanning segment. N-linked (GlcNAc...) asparagine glycans are attached at residues asparagine 174, asparagine 218, asparagine 283, asparagine 307, and asparagine 441. Cysteine 495 contacts heme.

It belongs to the cytochrome P450 family. The cofactor is heme.

It localises to the membrane. In terms of biological role, cytochrome P450 monooxygenase; part of the gene cluster that mediates the biosynthesis of abscisic acid (ABA), a phytohormone that acts antagonistically toward salicylic acid (SA), jasmonic acid (JA) and ethylene (ETH) signaling, to impede plant defense responses. The first step of the pathway catalyzes the reaction from farnesyl diphosphate to alpha-ionylideneethane performed by the alpha-ionylideneethane synthase abl3 via a three-step reaction mechanism involving 2 neutral intermediates, beta-farnesene and allofarnesene. The cytochrome P450 monooxygenase abl1 might then be involved in the conversion of alpha-ionylideneethane to alpha-ionylideneacetic acid. Alpha-ionylideneacetic acid is further converted to abscisic acid in 2 steps involving the cytochrome P450 monooxygenase abl2 and the short-chain dehydrogenase/reductase abl4, via the intermediates 1'-deoxy-ABA or 1',4'-trans-diol-ABA, depending on the order of action of these 2 enzymes. Abl2 is responsible for the hydroxylation of carbon atom C-1' and abl4 might be involved in the oxidation of the C-4' carbon atom. The cytochrome monooxygenase abl5 seems not essential for the biosynthesis of ABA and its function remains to be identified. In Leptosphaeria maculans (strain JN3 / isolate v23.1.3 / race Av1-4-5-6-7-8) (Blackleg fungus), this protein is Cytochrome P450 monooxygenase abl5.